A 364-amino-acid polypeptide reads, in one-letter code: Small ribosomal subunit biogenesis GTPase RsgA (364 aa).

The CP-type G domain maps to 101-264 (KGLVEKPGVP…VIDTPGLREL (164 aa)). Residues 154–157 (NKSD) and 206–214 (GSSGAGKST) each bind GTP. The Zn(2+) site is built by C288, C293, H295, and C301. Residues 339-364 (QVAQKRKRKTIPRQGKRWRREHGDGQ) form a disordered region. Residues 342–358 (QKRKRKTIPRQGKRWRR) show a composition bias toward basic residues.

It belongs to the TRAFAC class YlqF/YawG GTPase family. RsgA subfamily. As to quaternary structure, monomer. Associates with 30S ribosomal subunit, binds 16S rRNA. It depends on Zn(2+) as a cofactor.

The protein resides in the cytoplasm. One of several proteins that assist in the late maturation steps of the functional core of the 30S ribosomal subunit. Helps release RbfA from mature subunits. May play a role in the assembly of ribosomal proteins into the subunit. Circularly permuted GTPase that catalyzes slow GTP hydrolysis, GTPase activity is stimulated by the 30S ribosomal subunit. This is Small ribosomal subunit biogenesis GTPase RsgA from Syntrophotalea carbinolica (strain DSM 2380 / NBRC 103641 / GraBd1) (Pelobacter carbinolicus).